The primary structure comprises 304 residues: DCN1-like protein 3 (304 aa).

Disordered stretches follow at residues 1–87 (MGQC…EESS) and 284–304 (EGEG…EEQT). Glycine 2 carries the N-myristoyl glycine lipid modification. Positions 86–278 (SSLQRLEELF…LFDTFVEWEM (193 aa)) constitute a DCUN1 domain.

In terms of assembly, part of a complex containing DCUN1D3, CUL3 and RBX1. Interacts (via the DCUN1 domain) with the unneddylated cullins: interacts with CUL1, CUL2, CUL3, CUL4A, CUL4B and CUL5; these interactions promote the cullin neddylation and the identity of the cullin dictates the affinity of the interaction. Interacts preferentially with CUL3; this interaction triggers the relocalization of CUL3 to the cell membrane where CUL3 is neddylated. Interacts (via DCUN1 domain) with RBX1. May also interact with regulators or subunits of cullin-RING ligases such as RNF7, ELOB and DDB1; these interactions are bridged by cullins. Interacts (via DCUN1 domain) with CAND1; this interaction is bridged by cullins and strongly inhibits cullin neddylation. These CAND-cullin-DCNL complexes can only be neddylated in the presence of a substrate adapter. Interacts (via DCUN1 domain) with the N-terminally acetylated form of UBE2M and UBE2F.

The protein resides in the cell membrane. It localises to the cytoplasm. The protein localises to the nucleus. Its subcellular location is the perinuclear region. In terms of biological role, contributes to the neddylation of all cullins by transferring NEDD8 from N-terminally acetylated NEDD8-conjugating E2s enzyme to different cullin C-terminal domain-RBX complexes and may play a role in the cell cycle progression by regulating the SCF ubiquitin E3 ligase complex, after UV damage. At the cell membrane, can promote and as well inhibit cullins neddylation. This Bos taurus (Bovine) protein is DCN1-like protein 3.